The primary structure comprises 215 residues: Cytochrome b6 (215 aa).

Residues 32-52 (IFYCLGGITFTSFVIQVASGF) traverse the membrane as a helical segment. Cys-35 is a binding site for heme c. Heme b is bound by residues His-86 and His-100. Helical transmembrane passes span 90–110 (ASMM…TGGF), 116–136 (LTWV…VTGY), and 186–206 (LHTF…FLMI). 2 residues coordinate heme b: His-187 and His-202.

Belongs to the cytochrome b family. PetB subfamily. As to quaternary structure, the 4 large subunits of the cytochrome b6-f complex are cytochrome b6, subunit IV (17 kDa polypeptide, PetD), cytochrome f and the Rieske protein, while the 4 small subunits are PetG, PetL, PetM and PetN. The complex functions as a dimer. Heme b serves as cofactor. It depends on heme c as a cofactor.

The protein resides in the plastid. It is found in the chloroplast thylakoid membrane. Functionally, component of the cytochrome b6-f complex, which mediates electron transfer between photosystem II (PSII) and photosystem I (PSI), cyclic electron flow around PSI, and state transitions. This is Cytochrome b6 from Chaetosphaeridium globosum (Charophycean green alga).